Here is a 306-residue protein sequence, read N- to C-terminus: Dermonecrotic toxin LarSicTox-alphaIB1ai (306 aa).

A signal peptide is located at residue Val1. Positions 2–27 (RATEKFASMYFFCHSPQSAETDVAER) are excised as a propeptide. Residue His38 is part of the active site. Residues Glu58 and Asp60 each contribute to the Mg(2+) site. The active-site Nucleophile is His74. Cystine bridges form between Cys78-Cys84 and Cys80-Cys223. Asp118 serves as a coordination point for Mg(2+). N-linked (GlcNAc...) asparagine glycosylation occurs at Asn283.

This sequence belongs to the arthropod phospholipase D family. Class II subfamily. Mg(2+) is required as a cofactor. As to expression, expressed by the venom gland.

The protein localises to the secreted. The catalysed reaction is an N-(acyl)-sphingosylphosphocholine = an N-(acyl)-sphingosyl-1,3-cyclic phosphate + choline. It catalyses the reaction an N-(acyl)-sphingosylphosphoethanolamine = an N-(acyl)-sphingosyl-1,3-cyclic phosphate + ethanolamine. It carries out the reaction a 1-acyl-sn-glycero-3-phosphocholine = a 1-acyl-sn-glycero-2,3-cyclic phosphate + choline. The enzyme catalyses a 1-acyl-sn-glycero-3-phosphoethanolamine = a 1-acyl-sn-glycero-2,3-cyclic phosphate + ethanolamine. Dermonecrotic toxins cleave the phosphodiester linkage between the phosphate and headgroup of certain phospholipids (sphingolipid and lysolipid substrates), forming an alcohol (often choline) and a cyclic phosphate. This toxin acts on sphingomyelin (SM). It may also act on ceramide phosphoethanolamine (CPE), lysophosphatidylcholine (LPC) and lysophosphatidylethanolamine (LPE), but not on lysophosphatidylserine (LPS), and lysophosphatidylglycerol (LPG). It acts by transphosphatidylation, releasing exclusively cyclic phosphate products as second products. Induces dermonecrosis, hemolysis, increased vascular permeability, edema, inflammatory response, and platelet aggregation. The protein is Dermonecrotic toxin LarSicTox-alphaIB1ai of Loxosceles arizonica (Arizona brown spider).